Consider the following 115-residue polypeptide: U2-ctenitoxin-Pn1b (115 aa).

The first 17 residues, 1–17 (MKVAVIILSILVLAAAS), serve as a signal peptide directing secretion. Residues 18–61 (ESIEEYREDFSRPNAMERSANDWIPTAPSAVERSADFAVEELER) constitute a propeptide that is removed on maturation. 5 disulfide bridges follow: C64–C78, C71–C84, C75–C113, C77–C98, and C86–C96. Residue K115 is a propeptide.

It belongs to the neurotoxin 03 (Tx2) family. 04 subfamily. Expressed by the venom gland.

Its subcellular location is the secreted. Its function is as follows. Blocks voltage-gated sodium channels (Nav). The sequence is that of U2-ctenitoxin-Pn1b from Phoneutria nigriventer (Brazilian armed spider).